The primary structure comprises 555 residues: Glucose-6-phosphate isomerase (555 aa).

E365 acts as the Proton donor in catalysis. Catalysis depends on residues H396 and K522.

This sequence belongs to the GPI family.

The protein localises to the cytoplasm. It catalyses the reaction alpha-D-glucose 6-phosphate = beta-D-fructose 6-phosphate. It functions in the pathway carbohydrate biosynthesis; gluconeogenesis. Its pathway is carbohydrate degradation; glycolysis; D-glyceraldehyde 3-phosphate and glycerone phosphate from D-glucose: step 2/4. Catalyzes the reversible isomerization of glucose-6-phosphate to fructose-6-phosphate. This Psychrobacter arcticus (strain DSM 17307 / VKM B-2377 / 273-4) protein is Glucose-6-phosphate isomerase.